The following is a 477-amino-acid chain: PTS system glucose-specific EIICB component (477 aa).

Residues 1-388 (MFKNVFSSLQ…FNLKTPGREE (388 aa)) form the PTS EIIC type-1 domain. 9 helical membrane-spanning segments follow: residues 20-40 (VSVLPIAGILLGIGSAHFTLI), 51-71 (TGGSIFSNMPLIFAIGVALGF), 76-96 (GVAALAAVVAYSILIQTLSAV), 112-132 (NFSDIGILGGIIAGAISAYMF), 152-172 (FVPIISGLFAIFVGLILSLIW), 250-270 (LSGGFIFKMYGLPGAALAIWH), 280-300 (IGSIMISAALTAFLTGITEPI), 304-324 (FILVAPILYIIHAILAGLSFP), and 354-374 (IFLFPIVGICYGLLYYSIFYF). Residues 399 to 477 (IEIAPYIVEA…TAIDEYINNI (79 aa)) enclose the PTS EIIB type-1 domain. Cys-421 acts as the Phosphocysteine intermediate; for EIIB activity in catalysis. Phosphocysteine is present on Cys-421.

It is found in the cell inner membrane. It catalyses the reaction N(pros)-phospho-L-histidyl-[protein] + D-glucose(out) = D-glucose 6-phosphate(in) + L-histidyl-[protein]. The phosphoenolpyruvate-dependent sugar phosphotransferase system (sugar PTS), a major carbohydrate active transport system, catalyzes the phosphorylation of incoming sugar substrates concomitantly with their translocation across the cell membrane. The enzyme II complex composed of PtsG and Crr is involved in glucose transport. The sequence is that of PTS system glucose-specific EIICB component (ptsG) from Buchnera aphidicola subsp. Schizaphis graminum (strain Sg).